Consider the following 216-residue polypeptide: 3-isopropylmalate dehydratase small subunit (216 aa).

Belongs to the LeuD family. LeuD type 1 subfamily. Heterodimer of LeuC and LeuD.

It catalyses the reaction (2R,3S)-3-isopropylmalate = (2S)-2-isopropylmalate. It participates in amino-acid biosynthesis; L-leucine biosynthesis; L-leucine from 3-methyl-2-oxobutanoate: step 2/4. Functionally, catalyzes the isomerization between 2-isopropylmalate and 3-isopropylmalate, via the formation of 2-isopropylmaleate. This chain is 3-isopropylmalate dehydratase small subunit, found in Polaromonas naphthalenivorans (strain CJ2).